Here is a 360-residue protein sequence, read N- to C-terminus: Aminomethyltransferase (360 aa).

Belongs to the GcvT family. The glycine cleavage system is composed of four proteins: P, T, L and H.

It catalyses the reaction N(6)-[(R)-S(8)-aminomethyldihydrolipoyl]-L-lysyl-[protein] + (6S)-5,6,7,8-tetrahydrofolate = N(6)-[(R)-dihydrolipoyl]-L-lysyl-[protein] + (6R)-5,10-methylene-5,6,7,8-tetrahydrofolate + NH4(+). Functionally, the glycine cleavage system catalyzes the degradation of glycine. This is Aminomethyltransferase from Bdellovibrio bacteriovorus (strain ATCC 15356 / DSM 50701 / NCIMB 9529 / HD100).